Reading from the N-terminus, the 228-residue chain is uncharacterized protein (228 aa).

A signal peptide spans 1–19 (MYRYTWLLWWITILLRIQQ). Residues N41, N93, N100, N128, and N164 are each glycosylated (N-linked (GlcNAc...) asparagine; by host). Residues 189-209 (MWIIPLVIVTTIIVLICFKFP) traverse the membrane as a helical segment.

It belongs to the HHV-5 UL9 family.

It localises to the host membrane. This is an uncharacterized protein from Homo sapiens (Human).